We begin with the raw amino-acid sequence, 396 residues long: B2 bradykinin receptor (396 aa).

Residues 1–65 (MDTRSSLCPK…EWWSWLNAIQ (65 aa)) are Extracellular-facing. Residues Asn-33 and Asn-44 are each glycosylated (N-linked (GlcNAc...) asparagine). The chain crosses the membrane as a helical span at residues 66–89 (APFLWVLFLLAALENIFVLSVFCL). The Cytoplasmic portion of the chain corresponds to 90-98 (HKTNCTVAE). The chain crosses the membrane as a helical span at residues 99 to 123 (IYLGNLAAADLILACGLPFWAITIA). Residues 124 to 136 (NNFDWLFGEVLCR) lie on the Extracellular side of the membrane. Cys-135 and Cys-216 are disulfide-bonded. The chain crosses the membrane as a helical span at residues 137-158 (VVNTMIYMNLYSSICFLMLVSI). At 159–180 (DRYLALVKTMSMGRMRGVRWAK) the chain is on the cytoplasmic side. Position 161 is a phosphotyrosine (Tyr-161). A helical transmembrane segment spans residues 181–203 (LYSLVIWSCTLLLSSPMLVFRTM). At 204 to 226 (KDYREEGHNVTACVIVYPSRSWE) the chain is on the extracellular side. The N-linked (GlcNAc...) asparagine glycan is linked to Asn-212. A helical membrane pass occupies residues 227–253 (VFTNMLLNLVGFLLPLSIITFCTVRIM). At 254–272 (QVLRNNEMKKFKEVQTEKK) the chain is on the cytoplasmic side. A helical transmembrane segment spans residues 273 to 297 (ATVLVLAVLGLFVLCWFPFQISTFL). The Extracellular portion of the chain corresponds to 298–316 (DTLLRLGVLSGCWNERAVD). Residues 317-340 (IVTQISSYVAYSNSCLNPLVYVIV) form a helical membrane-spanning segment. Residues 341 to 396 (GKRFRKKSREVYQAICRKGGCMGESVQMENSMGTLRTSISVDRQIHKLQDWAGNKQ) are Cytoplasmic-facing. Tyr-352 is modified (phosphotyrosine). Cys-356 is lipidated: S-palmitoyl cysteine. Phosphoserine occurs at positions 365 and 371. Thr-374 is modified (phosphothreonine). Ser-378 and Ser-380 each carry phosphoserine; by GRK6.

Belongs to the G-protein coupled receptor 1 family. Bradykinin receptor subfamily. BDKRB2 sub-subfamily. Forms a complex with PECAM1 and GNAQ. Interacts with PECAM1. Post-translationally, diphosphorylation at Ser-365 and Ser-371, at Ser-378 and Ser-380, and at Thr-374 and Ser-380 seem to be correlated pairwise. Palmitoylation at Cys-356 and phosphorylation at Tyr-352 seem to be mutually exclusive. As to expression, uterus, vas deferens, kidney, ileum, heart, testis, lung and brain.

The protein localises to the cell membrane. Receptor for bradykinin. It is associated with G proteins that activate a phosphatidylinositol-calcium second messenger system. The protein is B2 bradykinin receptor (Bdkrb2) of Rattus norvegicus (Rat).